A 62-amino-acid polypeptide reads, in one-letter code: Conotoxin Mi5.2 (62 aa).

A signal peptide spans 1–19 (MRCVPVFIILLLLIPSASS). A propeptide spanning residues 20-50 (VDVQPLTRDDVPLASFLDDARRTLRSPWMTR) is cleaved from the precursor.

It belongs to the conotoxin T superfamily. In terms of processing, contains 2 disulfide bonds that can be either 'C1-C3, C2-C4' or 'C1-C4, C2-C3', since these disulfide connectivities have been observed for conotoxins with cysteine framework V (for examples, see AC P0DQQ7 and AC P81755). In terms of tissue distribution, expressed by the venom duct.

Its subcellular location is the secreted. This Conus miles (Soldier cone) protein is Conotoxin Mi5.2.